An 876-amino-acid chain; its full sequence is Alanine--tRNA ligase (876 aa).

K74 is subject to N6-acetyllysine. Zn(2+) contacts are provided by H564, H568, C666, and H670.

Belongs to the class-II aminoacyl-tRNA synthetase family. In terms of assembly, homotetramer. The cofactor is Zn(2+).

The protein localises to the cytoplasm. It catalyses the reaction tRNA(Ala) + L-alanine + ATP = L-alanyl-tRNA(Ala) + AMP + diphosphate. Functionally, catalyzes the attachment of alanine to tRNA(Ala) in a two-step reaction: alanine is first activated by ATP to form Ala-AMP and then transferred to the acceptor end of tRNA(Ala). Also edits incorrectly charged Ser-tRNA(Ala) and Gly-tRNA(Ala) via its editing domain. This Escherichia coli O1:K1 / APEC protein is Alanine--tRNA ligase.